The following is a 208-amino-acid chain: Uracil phosphoribosyltransferase (208 aa).

5-phospho-alpha-D-ribose 1-diphosphate is bound by residues R78, R103, and D130 to S138. Uracil contacts are provided by residues I193 and G198–A200. Residue D199 participates in 5-phospho-alpha-D-ribose 1-diphosphate binding.

The protein belongs to the UPRTase family. Requires Mg(2+) as cofactor.

The enzyme catalyses UMP + diphosphate = 5-phospho-alpha-D-ribose 1-diphosphate + uracil. The protein operates within pyrimidine metabolism; UMP biosynthesis via salvage pathway; UMP from uracil: step 1/1. Its activity is regulated as follows. Allosterically activated by GTP. Catalyzes the conversion of uracil and 5-phospho-alpha-D-ribose 1-diphosphate (PRPP) to UMP and diphosphate. This is Uracil phosphoribosyltransferase from Citrobacter koseri (strain ATCC BAA-895 / CDC 4225-83 / SGSC4696).